The sequence spans 126 residues: Urease subunit beta (126 aa).

The protein belongs to the urease beta subunit family. In terms of assembly, heterotrimer of UreA (gamma), UreB (beta) and UreC (alpha) subunits. Three heterotrimers associate to form the active enzyme.

The protein localises to the cytoplasm. It catalyses the reaction urea + 2 H2O + H(+) = hydrogencarbonate + 2 NH4(+). The protein operates within nitrogen metabolism; urea degradation; CO(2) and NH(3) from urea (urease route): step 1/1. This Frankia casuarinae (strain DSM 45818 / CECT 9043 / HFP020203 / CcI3) protein is Urease subunit beta.